The following is a 337-amino-acid chain: Pyridoxal 5'-phosphate synthase subunit PdxS (337 aa).

Position 63 (aspartate 63) interacts with D-ribose 5-phosphate. Catalysis depends on lysine 120, which acts as the Schiff-base intermediate with D-ribose 5-phosphate. Position 192 (glycine 192) interacts with D-ribose 5-phosphate. D-glyceraldehyde 3-phosphate is bound at residue lysine 204. Residues glycine 253 and 274–275 each bind D-ribose 5-phosphate; that span reads GS.

The protein belongs to the PdxS/SNZ family. As to quaternary structure, in the presence of PdxT, forms a dodecamer of heterodimers.

The enzyme catalyses aldehydo-D-ribose 5-phosphate + D-glyceraldehyde 3-phosphate + L-glutamine = pyridoxal 5'-phosphate + L-glutamate + phosphate + 3 H2O + H(+). It participates in cofactor biosynthesis; pyridoxal 5'-phosphate biosynthesis. Its function is as follows. Catalyzes the formation of pyridoxal 5'-phosphate from ribose 5-phosphate (RBP), glyceraldehyde 3-phosphate (G3P) and ammonia. The ammonia is provided by the PdxT subunit. Can also use ribulose 5-phosphate and dihydroxyacetone phosphate as substrates, resulting from enzyme-catalyzed isomerization of RBP and G3P, respectively. This is Pyridoxal 5'-phosphate synthase subunit PdxS from Aeropyrum pernix (strain ATCC 700893 / DSM 11879 / JCM 9820 / NBRC 100138 / K1).